The sequence spans 462 residues: Bifunctional enzyme LpxC/FabZ (462 aa).

Positions Met1–Lys302 are UDP-3-O-acyl-N-acetylglucosamine deacetylase. His78, His260, and Asp264 together coordinate Zn(2+). The Proton donor role is filled by His287. The segment at Gln303 to Glu462 is 3-hydroxyacyl-[acyl-carrier-protein] dehydratase. Residue His364 is part of the active site.

The protein in the N-terminal section; belongs to the LpxC family. It in the C-terminal section; belongs to the thioester dehydratase family. Requires Zn(2+) as cofactor.

It localises to the cytoplasm. The catalysed reaction is a UDP-3-O-[(3R)-3-hydroxyacyl]-N-acetyl-alpha-D-glucosamine + H2O = a UDP-3-O-[(3R)-3-hydroxyacyl]-alpha-D-glucosamine + acetate. It carries out the reaction a (3R)-hydroxyacyl-[ACP] = a (2E)-enoyl-[ACP] + H2O. Its pathway is glycolipid biosynthesis; lipid IV(A) biosynthesis; lipid IV(A) from (3R)-3-hydroxytetradecanoyl-[acyl-carrier-protein] and UDP-N-acetyl-alpha-D-glucosamine: step 2/6. In terms of biological role, catalyzes the hydrolysis of UDP-3-O-myristoyl-N-acetylglucosamine to form UDP-3-O-myristoylglucosamine and acetate, the committed step in lipid A biosynthesis. Functionally, involved in unsaturated fatty acids biosynthesis. Catalyzes the dehydration of short chain beta-hydroxyacyl-ACPs and long chain saturated and unsaturated beta-hydroxyacyl-ACPs. The protein is Bifunctional enzyme LpxC/FabZ (lpxC/fabZ) of Porphyromonas gingivalis (strain ATCC BAA-308 / W83).